A 611-amino-acid polypeptide reads, in one-letter code: Dihydroxy-acid dehydratase (611 aa).

D81 is a Mg(2+) binding site. C122 serves as a coordination point for [2Fe-2S] cluster. 2 residues coordinate Mg(2+): D123 and K124. Position 124 is an N6-carboxylysine (K124). Residue C195 participates in [2Fe-2S] cluster binding. E491 is a binding site for Mg(2+). The active-site Proton acceptor is the S517.

It belongs to the IlvD/Edd family. As to quaternary structure, homodimer. [2Fe-2S] cluster serves as cofactor. The cofactor is Mg(2+).

The enzyme catalyses (2R)-2,3-dihydroxy-3-methylbutanoate = 3-methyl-2-oxobutanoate + H2O. The catalysed reaction is (2R,3R)-2,3-dihydroxy-3-methylpentanoate = (S)-3-methyl-2-oxopentanoate + H2O. Its pathway is amino-acid biosynthesis; L-isoleucine biosynthesis; L-isoleucine from 2-oxobutanoate: step 3/4. It functions in the pathway amino-acid biosynthesis; L-valine biosynthesis; L-valine from pyruvate: step 3/4. Functions in the biosynthesis of branched-chain amino acids. Catalyzes the dehydration of (2R,3R)-2,3-dihydroxy-3-methylpentanoate (2,3-dihydroxy-3-methylvalerate) into 2-oxo-3-methylpentanoate (2-oxo-3-methylvalerate) and of (2R)-2,3-dihydroxy-3-methylbutanoate (2,3-dihydroxyisovalerate) into 2-oxo-3-methylbutanoate (2-oxoisovalerate), the penultimate precursor to L-isoleucine and L-valine, respectively. The chain is Dihydroxy-acid dehydratase from Histophilus somni (strain 129Pt) (Haemophilus somnus).